Reading from the N-terminus, the 431-residue chain is Glucose-1-phosphate adenylyltransferase (431 aa).

Lysine 39 contributes to the beta-D-fructose 1,6-bisphosphate binding site. 3 residues coordinate AMP: arginine 40, histidine 46, and arginine 52. Residue tyrosine 114 coordinates alpha-D-glucose 1-phosphate. Arginine 130 serves as a coordination point for AMP. Residues glycine 179, 194–195, and serine 212 contribute to the alpha-D-glucose 1-phosphate site; that span reads EK. AMP contacts are provided by glutamate 370 and arginine 386. Residues 419–423 and 429–431 each bind beta-D-fructose 1,6-bisphosphate; these read REMLR and QER.

It belongs to the bacterial/plant glucose-1-phosphate adenylyltransferase family. As to quaternary structure, homotetramer.

The catalysed reaction is alpha-D-glucose 1-phosphate + ATP + H(+) = ADP-alpha-D-glucose + diphosphate. The protein operates within glycan biosynthesis; glycogen biosynthesis. Allosterically activated by fructose-1,6-bisphosphate (F16BP) and inhibited by AMP. In terms of biological role, involved in the biosynthesis of ADP-glucose, a building block required for the elongation reactions to produce glycogen. Catalyzes the reaction between ATP and alpha-D-glucose 1-phosphate (G1P) to produce pyrophosphate and ADP-Glc. This Shigella boydii serotype 18 (strain CDC 3083-94 / BS512) protein is Glucose-1-phosphate adenylyltransferase.